We begin with the raw amino-acid sequence, 453 residues long: Enolase (453 aa).

Residue Gln163 participates in (2R)-2-phosphoglycerate binding. The Proton donor role is filled by Glu205. Residues Asp258, Glu308, and Asp335 each contribute to the Mg(2+) site. Positions 360, 389, 390, and 411 each coordinate (2R)-2-phosphoglycerate. The active-site Proton acceptor is Lys360.

It belongs to the enolase family. Requires Mg(2+) as cofactor.

It is found in the cytoplasm. The protein resides in the secreted. It localises to the cell surface. It carries out the reaction (2R)-2-phosphoglycerate = phosphoenolpyruvate + H2O. It participates in carbohydrate degradation; glycolysis; pyruvate from D-glyceraldehyde 3-phosphate: step 4/5. Functionally, catalyzes the reversible conversion of 2-phosphoglycerate (2-PG) into phosphoenolpyruvate (PEP). It is essential for the degradation of carbohydrates via glycolysis. This is Enolase from Mesoplasma florum (strain ATCC 33453 / NBRC 100688 / NCTC 11704 / L1) (Acholeplasma florum).